The chain runs to 290 residues: Aquaporin PIP2-1 (290 aa).

Residues 1-20 (MGKDDVIESGAGGGEFAAKD) are disordered. 2 consecutive transmembrane segments (helical) span residues 43–63 (AVIA…ATVI) and 80–100 (CGGV…FVLV). The NPA 1 signature appears at 112 to 114 (NPA). 3 helical membrane passes run 131–151 (LLYI…VKAF), 173–193 (GTGL…VFSA), and 205–225 (VPVL…LATI). An NPA 2 motif is present at residues 233–235 (NPA). The chain crosses the membrane as a helical span at residues 255-275 (IFWVGPLVGAAIAAFYHQYIL).

It belongs to the MIP/aquaporin (TC 1.A.8) family. PIP (TC 1.A.8.11) subfamily. Homomers. Can interact with PIP1-2 to form heteromers. As to expression, expressed in roots.

It is found in the cell membrane. Water channel required to facilitate the transport of water across cell membrane. Active as homomers. Increased activity when heteromerization with PIP1-2. This is Aquaporin PIP2-1 (PIP2-1) from Zea mays (Maize).